The chain runs to 44 residues: Thymosin beta-10 (44 aa).

2 stretches are compositionally biased toward basic and acidic residues: residues 1–25 (MADK…ETQE) and 33–44 (ETIEQEKRSEIS). A disordered region spans residues 1–44 (MADKPDMGEIASFDKAKLKKTETQEKNTLPTKETIEQEKRSEIS). At A2 the chain carries N-acetylalanine. K4 carries the N6-acetyllysine modification. S12 carries the post-translational modification Phosphoserine. K15 bears the N6-acetyllysine mark. 3 positions are modified to phosphothreonine: T21, T23, and T34. N6-acetyllysine is present on K39. The residue at position 41 (S41) is a Phosphoserine.

It belongs to the thymosin beta family.

Its subcellular location is the cytoplasm. The protein resides in the cytoskeleton. Functionally, plays an important role in the organization of the cytoskeleton. Binds to and sequesters actin monomers (G actin) and therefore inhibits actin polymerization. In Rattus norvegicus (Rat), this protein is Thymosin beta-10 (Tmsb10).